The primary structure comprises 379 residues: Homoserine O-succinyltransferase (379 aa).

One can recognise an AB hydrolase-1 domain in the interval asparagine 48–methionine 357. Serine 154 serves as the catalytic Nucleophile. Residue arginine 224 participates in substrate binding. Residues aspartate 319 and histidine 352 contribute to the active site. Aspartate 353 contacts substrate.

Belongs to the AB hydrolase superfamily. MetX family. Homodimer.

Its subcellular location is the cytoplasm. It carries out the reaction L-homoserine + succinyl-CoA = O-succinyl-L-homoserine + CoA. Its pathway is amino-acid biosynthesis; L-methionine biosynthesis via de novo pathway; O-succinyl-L-homoserine from L-homoserine: step 1/1. Its function is as follows. Transfers a succinyl group from succinyl-CoA to L-homoserine, forming succinyl-L-homoserine. This Neisseria meningitidis serogroup B (strain ATCC BAA-335 / MC58) protein is Homoserine O-succinyltransferase.